Here is a 300-residue protein sequence, read N- to C-terminus: tRNA dimethylallyltransferase (300 aa).

8–15 (GASASGKS) is a binding site for ATP. 10 to 15 (SASGKS) serves as a coordination point for substrate. Residues 33–36 (DSLS) form an interaction with substrate tRNA region.

The protein belongs to the IPP transferase family. Monomer. It depends on Mg(2+) as a cofactor.

The catalysed reaction is adenosine(37) in tRNA + dimethylallyl diphosphate = N(6)-dimethylallyladenosine(37) in tRNA + diphosphate. In terms of biological role, catalyzes the transfer of a dimethylallyl group onto the adenine at position 37 in tRNAs that read codons beginning with uridine, leading to the formation of N6-(dimethylallyl)adenosine (i(6)A). This Wolinella succinogenes (strain ATCC 29543 / DSM 1740 / CCUG 13145 / JCM 31913 / LMG 7466 / NCTC 11488 / FDC 602W) (Vibrio succinogenes) protein is tRNA dimethylallyltransferase.